Here is a 227-residue protein sequence, read N- to C-terminus: Uracil-DNA glycosylase 2 (227 aa).

Residue aspartate 67 is the Proton acceptor of the active site.

This sequence belongs to the uracil-DNA glycosylase (UDG) superfamily. UNG family.

The protein resides in the cytoplasm. It catalyses the reaction Hydrolyzes single-stranded DNA or mismatched double-stranded DNA and polynucleotides, releasing free uracil.. Excises uracil residues from the DNA which can arise as a result of misincorporation of dUMP residues by DNA polymerase or due to deamination of cytosine. In Streptomyces avermitilis (strain ATCC 31267 / DSM 46492 / JCM 5070 / NBRC 14893 / NCIMB 12804 / NRRL 8165 / MA-4680), this protein is Uracil-DNA glycosylase 2 (ung2).